A 125-amino-acid chain; its full sequence is Anticoagulant salivary protein 14 (125 aa).

An N-terminal signal peptide occupies residues 1-21; it reads MGLTGTMLVLVSLAFFGSAAA. Residues asparagine 26, asparagine 81, and asparagine 87 are each glycosylated (N-linked (GlcNAc...) asparagine). A compositionally biased stretch (polar residues) spans 75–86; that stretch reads GECHLTNNSGGP. Residues 75 to 125 are disordered; the sequence is GECHLTNNSGGPNETDDYTPAPTEKPKQKKKKTKKTKKPKRKSKKDQEKNL. The interval 91–125 is responsible for anticoagulant activity; that stretch reads DYTPAPTEKPKQKKKKTKKTKKPKRKSKKDQEKNL. The span at 101-118 shows a compositional bias: basic residues; sequence KQKKKKTKKTKKPKRKSK.

Belongs to the salp14 family. Salivary gland (at protein level). Saliva (at protein level).

Its subcellular location is the secreted. Its function is as follows. Salivary anticoagulant protein that facilitates blood feeding of adult ticks on vertebrate species. Inhibits host coagulation factor Xa (F10). Blocks the assembly and/or early activity of the prothrombinase complex (Xa-Va/F10-F5). Inhibits the lectin pathway of complement system activation in the host. The chain is Anticoagulant salivary protein 14 from Ixodes scapularis (Black-legged tick).